A 217-amino-acid chain; its full sequence is Nucleolar protein 12 (217 aa).

Positions 34–98 (GFHKRKVERK…LVTAKTESVQ (65 aa)) form a coiled coil. The disordered stretch occupies residues 122-217 (LGLPLPEQGD…MTGKARHNGE (96 aa)). The segment covering 130 to 141 (GDQDGSQEEEMS) has biased composition (acidic residues). Basic residues-rich tracts occupy residues 172–184 (AHSR…KHPR) and 201–217 (KTQR…HNGE).

This sequence belongs to the RRP17 family. As to quaternary structure, interacts with KIAA1191. In terms of tissue distribution, expressed in brain, lung, spleen, kidney and heart.

The protein resides in the nucleus. Its subcellular location is the nucleolus. It localises to the cytoplasm. In terms of biological role, multifunctional RNA binding protein that plays a role in RNA metabolism and DNA maintenance. Participates in the resolution of DNA stress and the maintenance of genome integrity by localizing to sites of DNA insults. Also plays a role in proper nucleolar organization by limiting nucleolar size and regulating nucleolar number. Mechanistically, regulates the nucleolar levels of fibrillarin and nucleolin, two key players in pre-rRNA processing and ribosome assembly. In Mus musculus (Mouse), this protein is Nucleolar protein 12 (Nol12).